A 424-amino-acid polypeptide reads, in one-letter code: tRNA(Met) cytidine acetate ligase (424 aa).

Residues 7 to 20, Gly102, Asn174, and Arg199 each bind ATP; that span reads ITEY…HLHH.

Belongs to the TmcAL family.

It localises to the cytoplasm. It catalyses the reaction cytidine(34) in elongator tRNA(Met) + acetate + ATP = N(4)-acetylcytidine(34) in elongator tRNA(Met) + AMP + diphosphate. Catalyzes the formation of N(4)-acetylcytidine (ac(4)C) at the wobble position of elongator tRNA(Met), using acetate and ATP as substrates. First activates an acetate ion to form acetyladenylate (Ac-AMP) and then transfers the acetyl group to tRNA to form ac(4)C34. The protein is tRNA(Met) cytidine acetate ligase of Alkaliphilus metalliredigens (strain QYMF).